Here is a 426-residue protein sequence, read N- to C-terminus: Elongation factor 1-alpha (426 aa).

One can recognise a tr-type G domain in the interval K5 to T221. The G1 stretch occupies residues G14–S21. G14–S21 contributes to the GTP binding site. S21 is a Mg(2+) binding site. The G2 stretch occupies residues G70–D74. The tract at residues D91–G94 is G3. Residues D91–H95 and N146–D149 each bind GTP. A G4 region spans residues N146–D149. Residues S185–F187 are G5.

The protein belongs to the TRAFAC class translation factor GTPase superfamily. Classic translation factor GTPase family. EF-Tu/EF-1A subfamily.

Its subcellular location is the cytoplasm. It catalyses the reaction GTP + H2O = GDP + phosphate + H(+). GTP hydrolase that promotes the GTP-dependent binding of aminoacyl-tRNA to the A-site of ribosomes during protein biosynthesis. In Methanosphaerula palustris (strain ATCC BAA-1556 / DSM 19958 / E1-9c), this protein is Elongation factor 1-alpha.